Consider the following 98-residue polypeptide: uncharacterized protein (98 aa).

2 consecutive transmembrane segments (helical) span residues 14–34 (FLVI…PVTA) and 41–61 (MTGA…ASII).

Its subcellular location is the cell membrane. This is an uncharacterized protein from Haemophilus influenzae (strain ATCC 51907 / DSM 11121 / KW20 / Rd).